The sequence spans 211 residues: Protein GrpE (211 aa).

The segment covering 1 to 10 (MTDDTKKPGP) has biased composition (basic and acidic residues). 2 disordered regions span residues 1–37 (MTDD…PDPV) and 187–211 (AKGG…EKDA). A compositionally biased stretch (acidic residues) spans 27 to 36 (EQAETAEPDP). Polar residues predominate over residues 201-211 (PGTSSLNEKDA).

It belongs to the GrpE family. As to quaternary structure, homodimer.

The protein localises to the cytoplasm. In terms of biological role, participates actively in the response to hyperosmotic and heat shock by preventing the aggregation of stress-denatured proteins, in association with DnaK and GrpE. It is the nucleotide exchange factor for DnaK and may function as a thermosensor. Unfolded proteins bind initially to DnaJ; upon interaction with the DnaJ-bound protein, DnaK hydrolyzes its bound ATP, resulting in the formation of a stable complex. GrpE releases ADP from DnaK; ATP binding to DnaK triggers the release of the substrate protein, thus completing the reaction cycle. Several rounds of ATP-dependent interactions between DnaJ, DnaK and GrpE are required for fully efficient folding. This is Protein GrpE from Agrobacterium fabrum (strain C58 / ATCC 33970) (Agrobacterium tumefaciens (strain C58)).